We begin with the raw amino-acid sequence, 429 residues long: Serine hydroxymethyltransferase (429 aa).

(6S)-5,6,7,8-tetrahydrofolate contacts are provided by residues Leu-126 and 130–132 (GHL). Lys-235 is subject to N6-(pyridoxal phosphate)lysine. Residue 359–361 (SPF) participates in (6S)-5,6,7,8-tetrahydrofolate binding.

This sequence belongs to the SHMT family. In terms of assembly, homodimer. Pyridoxal 5'-phosphate is required as a cofactor.

The protein resides in the cytoplasm. It carries out the reaction (6R)-5,10-methylene-5,6,7,8-tetrahydrofolate + glycine + H2O = (6S)-5,6,7,8-tetrahydrofolate + L-serine. The protein operates within one-carbon metabolism; tetrahydrofolate interconversion. It functions in the pathway amino-acid biosynthesis; glycine biosynthesis; glycine from L-serine: step 1/1. Catalyzes the reversible interconversion of serine and glycine with tetrahydrofolate (THF) serving as the one-carbon carrier. This reaction serves as the major source of one-carbon groups required for the biosynthesis of purines, thymidylate, methionine, and other important biomolecules. Also exhibits THF-independent aldolase activity toward beta-hydroxyamino acids, producing glycine and aldehydes, via a retro-aldol mechanism. The chain is Serine hydroxymethyltransferase from Prochlorococcus marinus (strain MIT 9313).